Reading from the N-terminus, the 1136-residue chain is MPEAKPAAKKASKGKDAPKEAPAKQTPEEPPKEAPPEDQSPTAEEPTGIFLKKPDSVSVETGKDAVILAKVNGKELPGKPTIKWFKGKWQELGSKSGARFIFKESHDSTSNVYTVELHIGKVVLGDRGDYRLEIKAKDVCDSCSFNVDVEAPRQDSSGQSLESFKRSGDGKSEDAGELDFSGLLKKREVVEEEKKKKKDDDDLGIPPEIWELLKGAKKSEYEKIAFQYGITDLRGMLKRLKKAKVEVKKSAAFTKKLDPAYQVDRGNKIKLVVEISDPDLPLKWFKNGQEIKPSSKYVFENVGKKRILTINKCTLADDAAYEVAVQDEKCFTELFVKEPPVLIVTPLEDQQVFVGDRVEMSVEVSEEGAQVMWMKDGVEMTREDSYKARYRFKKDGKRHILIYSDVAQEDGGRYQVITNGGQCEAELIVEEKQLEVLQDIADLTVKAAEQAVFKCEVSDEKVTGKWYKNGVEVRPSKRITISHVGRFHKLVIDDVRPEDEGDYTFVPDGYALSLSAKLNFLEIKVEYVPKQEPPKIHLDCSGKTSDNSIVVVAGNKLRLDVAITGEPPPTATWLRGDEVFTATEGRTHIEQRPDCSSFVIESAERSDEGRYTIKVTNPVGEDVASIFLRVVDVPDPPEAVRVTSVGEDWAILVWEPPKYDGGQPVTGYLMERKKKGSQRWMKINFEVFTDTTYESTKMIEGVLYEMRVFAVNAIGVSQPSMNTKPFMPIAPTSAPQHLTVEDVTDTTTTLKWRPPDRIGAGGIDGYLVEYCLEGSEEWVPANKEPVERCGFTVKDLPTGARILFRVVGVNIAGRSEPATLLQPVTIREIVEQPKIRLPRHLRQTYIRKVGEALNLVIPFQGKPRPQVVWTKGGAPLDTSRVNVRTSDFDTVFFVRQAARSDSGEYELSVQIENMKDTATIRIRVVEKAGPAENVMVKEVWGTNALVEWQPPKDDGNSEITGYFVQKADKKTMEWFNVYEHNRHTSCTVSDLIVGNEYYFRIFSENICGLSDSPGVSKNTARILKTGITLKPLEYKEHDFRTAPKFLTPLMDRVVVAGYTAALNCAVRGHPKPKVVWMKNKMEIHEDPKFLITNYQGILTLNIRRPSPFDAGTYSCRAFNELGEALAECKLDVRVPQ.

2 disordered regions span residues 1-55 and 151-177; these read MPEA…KKPD and APRQ…DAGE. Residues 13-35 are compositionally biased toward basic and acidic residues; it reads KGKDAPKEAPAKQTPEEPPKEAP. Positions 46–149 constitute an Ig-like C2-type 1 domain; sequence PTGIFLKKPD…CDSCSFNVDV (104 aa). The span at 163–174 shows a compositional bias: basic and acidic residues; the sequence is SFKRSGDGKSED. Ig-like C2-type domains follow at residues 250 to 339, 340 to 432, 433 to 533, and 534 to 633; these read SAAF…VKEP, PVLI…VEEK, QLEV…KQEP, and PKIH…VVDV. Fibronectin type-III domains follow at residues 636 to 732 and 734 to 829; these read PPEA…IAPT and APQH…IREI. The Ig-like C2-type 6 domain occupies 833 to 927; the sequence is PKIRLPRHLR…ATIRIRVVEK (95 aa). Residues 930–1025 form the Fibronectin type-III 3 domain; that stretch reads PAENVMVKEV…SKNTARILKT (96 aa). The Ig-like C2-type 7 domain maps to 1043–1136; it reads PKFLTPLMDR…ECKLDVRVPQ (94 aa).

It belongs to the immunoglobulin superfamily. MyBP family.

Functionally, thick filament-associated protein located in the crossbridge region of vertebrate striated muscle a bands. In vitro it binds MHC, F-actin and native thin filaments, and modifies the activity of actin-activated myosin ATPase. It may modulate muscle contraction or may play a more structural role. This Mus musculus (Mouse) protein is Myosin-binding protein C, fast-type (Mybpc2).